The primary structure comprises 1048 residues: MSNKTGGKRPATTNSDIPNHNMVSEVPPERPSVRATRTARKAVAFGKRSHSMKRNPNAPVTKAGWLFKQASSGVKQWNKRWFVLVDRCLFYYKDEKEESILGSIPLLSFRVAAVQPSDNISRKHTFKAEHAGVRTYFFSAESPEEQEAWIQAMGEAARVQIPPAQKSVPQAVRHSHEKPDSENVPPSKHHQQPPHNSLPKPEPEAKTRGEGDGRGCEKAERRPERPEVKKEPPVKANGLPAGPEPASEPGSPYPEGPRVPGGGEQPAQPNGWQYHSPSRPGSTAFPSQDGETGGHRRSFPPRTNPDKIAQRKSSMNQLQQWVNLRRGVPPPEDLRSPSRFYPVSRRVPEYYGPYSSQYPDDYQYYPPGVRPESICSMPAYDRISPPWALEDKRHAFRNGGGPAYQLREWKEPASYGRQDATVWIPSPSRQPVYYDELDAASSSLRRLSLQPRSHSVPRSPSQGSYSRARIYSPVRSPSARFERLPPRSEDIYADPAAYVMRRSISSPKVPPYPEVFRDSLHTYKLNEQDTDKLLGKLCEQNKVVREQDRLVQQLRAEKESLESALMGTHQELEMFGSQPAYPEKLRHKKDSLQNQLINIRVELSQATTALTNSTIEYEHLESEVSALHDDLWEQLNLDTQNEVLNRQIQKEIWRIQDVMEGLRKNNPSRGTDTAKHRGGLGPSATYSSNSPASPLSSASLTSPLSPFSLVSGSQGSPTKPGSNEPKANYEQSKKDPHQTLPLDTPRDISLVPTRQEVEAEKQAALNKVGVVPPRTKSPTDDEVTPSAVVRRNASGLTNGLSSQERPKSAVFPGEGKVKMSVEEQIDRMRRHQSGSMREKRRSLQLPASPAPDPSPRPAYKVVRRHRSIHEVDISNLEAALRAEEPGGHAYETPREEIARLRKMELEPQHYDVDINKELSTPDKVLIPERYIDLEPDTPLSPEELKEKQKKVERIKTLIAKSSMQNVVPIGEGDSVDVPQDSESQLQEQEKRIEISCALATEASRRGRMLSVQCATPSPPTSPASPAPPANPLSSESPRGADSSYTMRV.

Residues 1–22 are compositionally biased toward polar residues; it reads MSNKTGGKRPATTNSDIPNHNM. The segment at 1–36 is disordered; sequence MSNKTGGKRPATTNSDIPNHNMVSEVPPERPSVRAT. Positions 59–158 constitute a PH domain; it reads PVTKAGWLFK…WIQAMGEAAR (100 aa). 2 disordered regions span residues 165-318 and 448-467; these read QKSV…MNQL and SLQP…SYSR. Positions 201 to 233 are enriched in basic and acidic residues; that stretch reads PEPEAKTRGEGDGRGCEKAERRPERPEVKKEPP. A phosphoserine mark is found at S247 and S251. A compositionally biased stretch (polar residues) spans 267–290; sequence AQPNGWQYHSPSRPGSTAFPSQDG. 4 positions are modified to phosphoserine: S314, S459, S461, and S472. A compositionally biased stretch (polar residues) spans 456–465; that stretch reads VPRSPSQGSY. Y492 bears the Phosphotyrosine mark. S591 bears the Phosphoserine mark. The segment at 663–746 is disordered; it reads RKNNPSRGTD…HQTLPLDTPR (84 aa). Low complexity predominate over residues 687–711; sequence SSNSPASPLSSASLTSPLSPFSLVS. Over residues 712 to 721 the composition is skewed to polar residues; sequence GSQGSPTKPG. At T744 the chain carries Phosphothreonine. A Phosphoserine modification is found at S777. T784 carries the phosphothreonine modification. The segment at 793–858 is disordered; it reads ASGLTNGLSS…PAPDPSPRPA (66 aa). Over residues 794 to 803 the composition is skewed to polar residues; sequence SGLTNGLSSQ. S801 is subject to Phosphoserine. Positions 815 to 827 are enriched in basic and acidic residues; the sequence is GKVKMSVEEQIDR. Residues 828-842 show a composition bias toward basic residues; that stretch reads MRRHQSGSMREKRRS. S848, S854, and S867 each carry phosphoserine. The residue at position 920 (T920) is a Phosphothreonine. Phosphoserine is present on S940. Disordered regions lie at residues 968-989 and 1005-1048; these read PIGE…QEQE and RGRM…TMRV. Position 1015 is a phosphothreonine (T1015). The segment covering 1016–1030 has biased composition (pro residues); that stretch reads PSPPTSPASPAPPAN. S1017 is modified (phosphoserine). At T1020 the chain carries Phosphothreonine. Residues S1021 and S1024 each carry the phosphoserine modification.

Highly expressed in heart, kidney and throughout the brain.

This chain is Pleckstrin homology domain-containing family A member 6 (PLEKHA6), found in Homo sapiens (Human).